We begin with the raw amino-acid sequence, 802 residues long: MMMDEDVEQATLVSYSDKPRTFPDMRSKTYSPLIIRILRNLNVRALSVLLLLSFGGIFYMGARTSPIIVFVFVVCIISFMLSVYLTKWVLAKDEGPPEMVQISDAIRDGAEGFLRTQYGTISKMAFLLAFVILCIYLFRNLTPQQEASGLGRTMSAYITVAAFLLGALCSGIAGYVGMWVSVRANVRVSSAARRSAREALQIAVRAGGFSALVVVGMAVIGIAILYSTFYVWLDVDSPGSMKVTDLPLLLVGYGFGASFVALFAQLGGGIYTKGADVGADLVGKVEHGIPEDDPRNPAVIADLVGDNVGDCAARGADLFESIAAEIISAMILGGTMAQKCKIEDPSGFILFPLVVHSFDLVISSIGILSIKGTRNASVKSPVEDPMVVLQKGYSLTIILAVLTFGASTRWLLYTEQAPSAWLNFFMCGLVGIITAYVFVWISRYYTDYKYEPVRTLALASSTGHGTNIIAGVSLGLESTALPVLVISVAIISAFWLGNTSGLIDEKGNPTGGLFGTAVATMGMLSTAAYVLTMDMFGPIADNAGGIVEMSQQPESVREITDVLDAVGNTTKATTKGFAIGSAALASFLLFSAYMDEVSAFANVSFKEVDIAIPEVFIGGLLGAMLIFLFSAWACAAVGRTAQEVVNEVRRQFIERPGIMDYKEKPDYGRCVAIVASSALREMIKPGALAIISPIAVGFVFRILGYYTGQPLLGAKVVAAMLMFATVCGILMALFLNTAGGAWDNAKKYIETGALGGKGSDSHKAAVTGDTVGDPFKDTAGPSIHVLIKMLATITLVMAPIFL.

6 helical membrane-spanning segments follow: residues 41-61 (LNVR…FYMG), 66-86 (PIIV…VYLT), 118-138 (YGTI…IYLF), 160-180 (VAAF…GMWV), 206-226 (AGGF…AILY), and 246-266 (LPLL…FAQL). Lysine 273 is a substrate binding site. Residues aspartate 276, aspartate 280, and aspartate 306 each coordinate Mg(2+). 5 helical membrane-spanning segments follow: residues 348–368 (FILF…IGIL), 386–406 (MVVL…TFGA), 421–441 (WLNF…FVWI), 468–491 (IIAG…VAII), and 511–531 (GGLF…AYVL). Mg(2+) is bound by residues aspartate 541 and asparagine 568. 4 helical membrane passes run 577–597 (FAIG…MDEV), 615–635 (VFIG…WACA), 686–706 (GALA…LGYY), and 716–736 (VVAA…LFLN). The Mg(2+) site is built by aspartate 743 and aspartate 773. Lysine 776 serves as a coordination point for substrate. Residues 782-802 (SIHVLIKMLATITLVMAPIFL) form a helical membrane-spanning segment.

It belongs to the H(+)-translocating pyrophosphatase (TC 3.A.10) family. K(+)-insensitive subfamily. In terms of assembly, monomer.

The protein localises to the golgi apparatus membrane. It catalyses the reaction diphosphate + H2O + H(+)(in) = 2 phosphate + 2 H(+)(out). The polypeptide is Pyrophosphate-energized membrane proton pump 3 (AVPL2) (Arabidopsis thaliana (Mouse-ear cress)).